Consider the following 258-residue polypeptide: Indole-3-glycerol phosphate synthase (258 aa).

This sequence belongs to the TrpC family.

It catalyses the reaction 1-(2-carboxyphenylamino)-1-deoxy-D-ribulose 5-phosphate + H(+) = (1S,2R)-1-C-(indol-3-yl)glycerol 3-phosphate + CO2 + H2O. The protein operates within amino-acid biosynthesis; L-tryptophan biosynthesis; L-tryptophan from chorismate: step 4/5. The sequence is that of Indole-3-glycerol phosphate synthase from Geobacillus thermodenitrificans (strain NG80-2).